The primary structure comprises 181 residues: ATP synthase subunit delta (181 aa).

This sequence belongs to the ATPase delta chain family. In terms of assembly, F-type ATPases have 2 components, F(1) - the catalytic core - and F(0) - the membrane proton channel. F(1) has five subunits: alpha(3), beta(3), gamma(1), delta(1), epsilon(1). F(0) has three main subunits: a(1), b(2) and c(10-14). The alpha and beta chains form an alternating ring which encloses part of the gamma chain. F(1) is attached to F(0) by a central stalk formed by the gamma and epsilon chains, while a peripheral stalk is formed by the delta and b chains.

It localises to the cell inner membrane. F(1)F(0) ATP synthase produces ATP from ADP in the presence of a proton or sodium gradient. F-type ATPases consist of two structural domains, F(1) containing the extramembraneous catalytic core and F(0) containing the membrane proton channel, linked together by a central stalk and a peripheral stalk. During catalysis, ATP synthesis in the catalytic domain of F(1) is coupled via a rotary mechanism of the central stalk subunits to proton translocation. In terms of biological role, this protein is part of the stalk that links CF(0) to CF(1). It either transmits conformational changes from CF(0) to CF(1) or is implicated in proton conduction. This Mannheimia succiniciproducens (strain KCTC 0769BP / MBEL55E) protein is ATP synthase subunit delta.